Here is a 251-residue protein sequence, read N- to C-terminus: Phosphosulfolactate synthase (251 aa).

The protein belongs to the phosphosulfolactate synthase family. In terms of assembly, homotrimer. Mg(2+) is required as a cofactor.

It carries out the reaction (2R)-O-phospho-3-sulfolactate = phosphoenolpyruvate + sulfite + H(+). Its pathway is cofactor biosynthesis; coenzyme M biosynthesis; sulfoacetaldehyde from phosphoenolpyruvate and sulfite: step 1/4. In terms of biological role, catalyzes the addition of sulfite to phosphoenolpyruvate (PEP) to yield (2R)-phospho-3-sulfolactate (PSL). This is Phosphosulfolactate synthase (comA) from Methanocaldococcus jannaschii (strain ATCC 43067 / DSM 2661 / JAL-1 / JCM 10045 / NBRC 100440) (Methanococcus jannaschii).